Here is a 138-residue protein sequence, read N- to C-terminus: Enhancer of split malpha protein (138 aa).

Belongs to the M4-like protein family.

Functionally, part of the Notch signaling pathway. The polypeptide is Enhancer of split malpha protein (Drosophila melanogaster (Fruit fly)).